A 1862-amino-acid chain; its full sequence is MSQKSWIESTLTKRECVYIIPSSKDPHRCLPGCQICQQLVRCFCGRLVKQHACFTASLATKYSDVKLGEHFNQAIEEWSVEKHTEQSPTDAYGVINFQGGSHSYRAKYVRLSYDTKPEIILQLLLKEWQMELPKLVISVHGGMQKFELHPRIKQLLGKGLIKAAVTTGAWILTGGVNTGVAKHVGDALKEHASRSSRKICTIGIAPWGVIENRNDLVGRDVVAPYQTLLNPLSKLNVLNNLHSHFILVDDGTVGKYGAEVRLRRELEKTINQQRIHARIGQGVPVVALIFEGGPNVILTVLEYLQESPPVPVVVCEGTGRAADLLAYIHKQTEEGGNLPDAAEPDIISTIKKTFNFGQSEAVHLFQTMMECMKKKELITVFHIGSEDHQDIDVAILTALLKGTNASAFDQLILTLAWDRVDIAKNHVFVYGQQWLVGSLEQAMLDALVMDRVSFVKLLIENGVSMHKFLTIPRLEELYNTKQGPTNPMLFHLIRDVKQGNLPPGYKITLIDIGLVIEYLMGGTYRCTYTRKRFRLIYNSLGGNNRRSGRNASSSTPQLRKSHETFGNRADKKEKMRHNHFIKTAQPYRPKMDASMEEGKKKRTKDEIVDIDDPETKRFPYPLNELLIWACLMKRQVMARFLWQHGEESMAKALVACKIYRSMAYEAKQSDLVDDTSEELKQYSNDFGQLAVELLEQSFRQDETMAMKLLTYELKNWSNSTCLKLAVSSRLRPFVAHTCTQMLLSDMWMGRLNMRKNSWYKVILSILVPPAILMLEYKTKAEMSHIPQSQDAHQMTMEDSENNFHNITEEIPMEVFKEVKILDSSEGKNEMEIHIKSKKLPITRKFYAFYHAPIVKFWFNTLAYLGFLMLYTFVVLVQMEQLPSVQEWIVIAYIFTYAIEKIREVFMSEAGKISQKIKVWFSDYFNVSDTIAIISFFVGFGLRFGAKWNYINAYDNHVFVAGRLIYCLNIIFWYVRLLDFLAVNQQAGPYVMMIGKMVANMFYIVVIMALVLLSFGVPRKAILYPHEEPSWSLAKDIVFHPYWMIFGEVYAYEIDVCANDSALPTICGPGTWLTPFLQAVYLFVQYIIMVNLLIAFFNNVYLQVKAISNIVWKYQRYHFIMAYHEKPVLPPPLIILSHIVSLFCCICKRRKKDKTSDGPKLFLTEEDQKKLHDFEEQCVEMYFDEKDDKFNSGSEERIRVTFERVEQMSIQIKEVGDRVNYIKRSLQSLDSQIGHLQDLSALTVDTLKTLTAQKASEASKVHNEITRELSISKHLAQNLIDDVPVRPMWKKPSVVNTLSSSLPQGDRESNNPFLCNIFMKDEKDPQYNLFGQDLPVIPQRKEFNIPEAGSSCGALFPSAVSPPELRQRRHGVEMLKIFNKNQKLGSSPNSSPHMSSPPTKFSVSTPSQPSCKSHLESTTKDPEPIFYKAAEGDNIEFGAFVGHRDSMDLQRFKETSNKIRELLSNDTPENTLKHVGAAGYNECHKTPTSLHSEQESCSRRASTEDSPDVDSRAALLPDWLRDRPTNREMPSEGGTLNGLASPFKPVLDTNYYYSAVERNNLMRLSQSIPFVPVPPRGEPVTVYRLEESSPSILNNSMSSWSQLGLCAKIEFLSKEEMGGGLRRAVKVLCTWSEHDVLRSGHLYIIKSFLPEVINTWSSIYKEDTVLHLCLREIQQQRAAQKLTFAFNQMKPKSIPYSPRFLEVFLLYCHSAGQWFAVEECMTGEFRKYNNNNGDEIIPTNTLEEIMLAFSHWTYEYTRGELLVLDLQGVGENLTDPSVIKAEEKRSCDMVFGPANLGEDAIKNFRAKHHCNSCCRKLKLPDLKRNDYTPDKIIFPQDESSDLNLQAGNSTKESEATNSVRLML.

N-acetylmethionine is present on Met1. Residues 1–850 are Cytoplasmic-facing; that stretch reads MSQKSWIEST…ITRKFYAFYH (850 aa). Residue Ser101 is modified to Phosphoserine. Residues 544–554 are compositionally biased toward low complexity; the sequence is NRRSGRNASSS. The tract at residues 544-574 is disordered; sequence NRRSGRNASSSTPQLRKSHETFGNRADKKEK. Residues 560–573 show a composition bias toward basic and acidic residues; that stretch reads KSHETFGNRADKKE. The chain crosses the membrane as a helical span at residues 851–876; the sequence is APIVKFWFNTLAYLGFLMLYTFVVLV. At 877 to 882 the chain is on the extracellular side; it reads QMEQLP. A helical membrane pass occupies residues 883 to 904; sequence SVQEWIVIAYIFTYAIEKIREV. At 905–923 the chain is on the cytoplasmic side; sequence FMSEAGKISQKIKVWFSDY. A helical transmembrane segment spans residues 924 to 943; the sequence is FNVSDTIAIISFFVGFGLRF. The Extracellular segment spans residues 944 to 956; it reads GAKWNYINAYDNH. A helical transmembrane segment spans residues 957–980; sequence VFVAGRLIYCLNIIFWYVRLLDFL. Residues 981–999 lie on the Cytoplasmic side of the membrane; it reads AVNQQAGPYVMMIGKMVAN. The helical transmembrane segment at 1000-1023 threads the bilayer; sequence MFYIVVIMALVLLSFGVPRKAILY. Topologically, residues 1024–1025 are extracellular; the sequence is PH. The segment at residues 1026–1066 is an intramembrane region (pore-forming); it reads EEPSWSLAKDIVFHPYWMIFGEVYAYEIDVCANDSALPTIC. The Extracellular segment spans residues 1067–1069; that stretch reads GPG. A helical transmembrane segment spans residues 1070 to 1098; sequence TWLTPFLQAVYLFVQYIIMVNLLIAFFNN. Residues 1099-1862 lie on the Cytoplasmic side of the membrane; that stretch reads VYLQVKAISN…EATNSVRLML (764 aa). S-palmitoyl cysteine attachment occurs at residues Cys1143, Cys1144, and Cys1146. At Thr1163 the chain carries Phosphothreonine. 5 positions are modified to phosphoserine: Ser1191, Ser1193, Ser1224, Ser1255, and Ser1258. Residues 1198–1250 adopt a coiled-coil conformation; the sequence is RVTFERVEQMSIQIKEVGDRVNYIKRSLQSLDSQIGHLQDLSALTVDTLKTLT. The residue at position 1265 (Thr1265) is a Phosphothreonine. 9 positions are modified to phosphoserine: Ser1300, Ser1357, Ser1360, Ser1385, Ser1386, Ser1389, Ser1394, Ser1395, and Ser1403. The tract at residues 1380–1418 is disordered; it reads NQKLGSSPNSSPHMSSPPTKFSVSTPSQPSCKSHLESTT. Over residues 1385-1397 the composition is skewed to low complexity; sequence SSPNSSPHMSSPP. The segment covering 1398–1410 has biased composition (polar residues); sequence TKFSVSTPSQPSC. A Phosphothreonine modification is found at Thr1404. Phosphoserine is present on residues Ser1406 and Ser1445. Position 1454 is a phosphothreonine (Thr1454). Residue Ser1455 is modified to Phosphoserine. Residues Thr1466 and Thr1470 each carry the phosphothreonine modification. The tract at residues 1485 to 1511 is disordered; sequence TPTSLHSEQESCSRRASTEDSPDVDSR. Phosphoserine is present on residues Ser1491, Ser1497, Ser1501, Ser1510, and Ser1530. The segment covering 1491 to 1502 has biased composition (basic and acidic residues); sequence SEQESCSRRAST. The residue at position 1534 (Thr1534) is a Phosphothreonine. Phosphoserine is present on Ser1540. A Phosphothreonine modification is found at Thr1548. Phosphoserine is present on residues Ser1564 and Ser1566. A Phosphothreonine modification is found at Thr1580. The 231-residue stretch at 1591 to 1821 folds into the Alpha-type protein kinase domain; sequence ILNNSMSSWS…CCRKLKLPDL (231 aa). Phosphoserine is present on residues Ser1595 and Ser1612. The ADP site is built by Gly1618, Gly1619, Leu1620, Arg1621, and Lys1645. Ser1657 is subject to Phosphoserine. Phosphothreonine is present on Thr1682. ADP contacts are provided by Glu1717, Glu1718, and Met1720. His1750 lines the Zn(2+) pocket. Catalysis depends on Asp1764, which acts as the Proton acceptor. Asp1774 contributes to the ADP binding site. Ser1776 bears the Phosphoserine mark. Residues His1807, Cys1809, and Cys1813 each coordinate Zn(2+). Thr1827 carries the post-translational modification Phosphothreonine. The disordered stretch occupies residues 1840 to 1862; that stretch reads DLNLQAGNSTKESEATNSVRLML. Phosphoserine is present on residues Ser1848 and Ser1857.

The protein in the C-terminal section; belongs to the protein kinase superfamily. Alpha-type protein kinase family. ALPK subfamily. This sequence in the N-terminal section; belongs to the transient receptor (TC 1.A.4) family. LTrpC subfamily. TRPM7 sub-subfamily. In terms of assembly, homodimer. Homotetramer. Forms heteromers with TRPM6; heteromeric channels are functionally different from the homomeric channels. Interacts with PLCB1. Requires Zn(2+) as cofactor. Palmitoylated; palmitoylation at Cys-1143, Cys-1144 and Cys-1146 promotes TRPM7 trafficking from the Golgi to the surface membrane. Post-translationally, autophosphorylated; autophosphorylation regulates TRPM7 kinase activity towards its substrates. In terms of processing, the C-terminal kinase domain can be cleaved from the channel segment in a cell-type-specific fashion. TRPM7 is cleaved by caspase-8, dissociating the kinase from the ion-conducting pore. The cleaved kinase fragments (M7CKs) can translocate to the cell nucleus and binds chromatin-remodeling complex proteins in a Zn(2+)-dependent manner to ultimately phosphorylate specific Ser/Thr residues of histones.

The protein resides in the cell membrane. It localises to the cytoplasmic vesicle membrane. Its subcellular location is the nucleus. It catalyses the reaction L-seryl-[protein] + ATP = O-phospho-L-seryl-[protein] + ADP + H(+). The catalysed reaction is L-threonyl-[protein] + ATP = O-phospho-L-threonyl-[protein] + ADP + H(+). The enzyme catalyses Mg(2+)(in) = Mg(2+)(out). It carries out the reaction Ca(2+)(in) = Ca(2+)(out). It catalyses the reaction Zn(2+)(in) = Zn(2+)(out). Channel displays constitutive activity. Channel activity is negatively regulated by cytosolic Mg(2+), Mg-ATP, low intracellular pH. Resting free cytosolic Mg(2+) and Mg-ATP concentrations seem to be sufficient to block native TRPM7 channel activity. TRPM7 channel activity is highly dependent on membrane levels of phosphatidylinositol 4,5 bisphosphate (PIP2). PIP2 hydrolysis negatively regulates TRPM7 channel activity. TRPM7 kinase activity does not affect channel activity. The kinase activity is controlled through the autophosphorylation of a serine/threonine-rich region located N-terminal to the catalytic domain. Its function is as follows. Bifunctional protein that combines an ion channel with an intrinsic kinase domain, enabling it to modulate cellular functions either by conducting ions through the pore or by phosphorylating downstream proteins via its kinase domain. The channel is highly permeable to divalent cations, specifically calcium (Ca2+), magnesium (Mg2+) and zinc (Zn2+) and mediates their influx. Controls a wide range of biological processes such as Ca2(+), Mg(2+) and Zn(2+) homeostasis, vesicular Zn(2+) release channel and intracellular Ca(2+) signaling, embryonic development, immune responses, cell motility, proliferation and differentiation. The C-terminal alpha-kinase domain autophosphorylates cytoplasmic residues of TRPM7. TRPM7 phosphorylates SMAD2, suggesting that TRPM7 kinase may play a role in activating SMAD signaling pathways. In vitro, TRPM7 kinase phosphorylates ANXA1 (annexin A1), myosin II isoforms and a variety of proteins with diverse cellular functions. The cleaved channel exhibits substantially higher current and potentiates Fas receptor signaling. In terms of biological role, the C-terminal kinase domain can be cleaved from the channel segment in a cell-type-specific fashion. In immune cells, the TRPM7 kinase domain is clipped from the channel domain by caspases in response to Fas-receptor stimulation. The cleaved kinase fragments can translocate to the nucleus, and bind chromatin-remodeling complex proteins in a Zn(2+)-dependent manner to ultimately phosphorylate specific Ser/Thr residues of histones known to be functionally important for cell differentiation and embryonic development. The polypeptide is Transient receptor potential cation channel subfamily M member 7 (Rattus norvegicus (Rat)).